The primary structure comprises 176 residues: Deoxyuridine 5'-triphosphate nucleotidohydrolase (176 aa).

Substrate contacts are provided by residues 67–69 (RSG), Asn-80, 84–86 (TVD), and Lys-94. The segment at 141–176 (GGFGSTGGHASVDGAEGGITHGGNSYASVVSDREGQ) is disordered.

Belongs to the dUTPase family. Mg(2+) serves as cofactor.

It catalyses the reaction dUTP + H2O = dUMP + diphosphate + H(+). The protein operates within pyrimidine metabolism; dUMP biosynthesis; dUMP from dCTP (dUTP route): step 2/2. Functionally, this enzyme is involved in nucleotide metabolism: it produces dUMP, the immediate precursor of thymidine nucleotides and it decreases the intracellular concentration of dUTP so that uracil cannot be incorporated into DNA. This is Deoxyuridine 5'-triphosphate nucleotidohydrolase from Streptomyces griseus subsp. griseus (strain JCM 4626 / CBS 651.72 / NBRC 13350 / KCC S-0626 / ISP 5235).